The chain runs to 324 residues: Glyoxylate/hydroxypyruvate reductase B (324 aa).

Catalysis depends on residues arginine 237 and glutamate 266. Histidine 285 acts as the Proton donor in catalysis.

This sequence belongs to the D-isomer specific 2-hydroxyacid dehydrogenase family. GhrB subfamily. In terms of assembly, homodimer.

It is found in the cytoplasm. The catalysed reaction is glycolate + NADP(+) = glyoxylate + NADPH + H(+). It carries out the reaction (R)-glycerate + NAD(+) = 3-hydroxypyruvate + NADH + H(+). It catalyses the reaction (R)-glycerate + NADP(+) = 3-hydroxypyruvate + NADPH + H(+). Its function is as follows. Catalyzes the NADPH-dependent reduction of glyoxylate and hydroxypyruvate into glycolate and glycerate, respectively. The protein is Glyoxylate/hydroxypyruvate reductase B of Salmonella heidelberg (strain SL476).